Here is an 88-residue protein sequence, read N- to C-terminus: uncharacterized protein (88 aa).

This is an uncharacterized protein from Bacillus subtilis (strain 168).